Here is an 88-residue protein sequence, read N- to C-terminus: Small ribosomal subunit protein bS20 (88 aa).

Residues 1–27 (MANTKQAQKRARQAEQRRQHNASQRSM) form a disordered region.

Belongs to the bacterial ribosomal protein bS20 family.

In terms of biological role, binds directly to 16S ribosomal RNA. The chain is Small ribosomal subunit protein bS20 from Chromohalobacter salexigens (strain ATCC BAA-138 / DSM 3043 / CIP 106854 / NCIMB 13768 / 1H11).